Consider the following 119-residue polypeptide: MARFVVVALLVLLSVSDLEAIQHPPKIQVYSRYPADNGKPNFLNCYVSGFHPSDIEVDLLKNGKKIEKVEHSDLSFSKDWSFYLLYYTEFTPNEKDEYACRVSHVTFLTPKTVKWDRNM.

An N-terminal signal peptide occupies residues 1-20 (MARFVVVALLVLLSVSDLEA). An Ig-like C1-type domain is found at 25 to 114 (PKIQVYSRYP…VTFLTPKTVK (90 aa)). An intrachain disulfide couples Cys45 to Cys100.

The protein belongs to the beta-2-microglobulin family. In terms of assembly, heterodimer of an alpha chain and a beta chain. Beta-2-microglobulin is the beta-chain of major histocompatibility complex class I molecules.

The protein localises to the secreted. Component of the class I major histocompatibility complex (MHC). Involved in the presentation of peptide antigens to the immune system. This Leontocebus fuscicollis (Brown-mantled tamarin) protein is Beta-2-microglobulin (B2M).